Reading from the N-terminus, the 280-residue chain is Bifunctional protein FolD (280 aa).

Residues 166-168 and Ser191 contribute to the NADP(+) site; that span reads GRS.

This sequence belongs to the tetrahydrofolate dehydrogenase/cyclohydrolase family. Homodimer.

It carries out the reaction (6R)-5,10-methylene-5,6,7,8-tetrahydrofolate + NADP(+) = (6R)-5,10-methenyltetrahydrofolate + NADPH. The catalysed reaction is (6R)-5,10-methenyltetrahydrofolate + H2O = (6R)-10-formyltetrahydrofolate + H(+). It functions in the pathway one-carbon metabolism; tetrahydrofolate interconversion. Catalyzes the oxidation of 5,10-methylenetetrahydrofolate to 5,10-methenyltetrahydrofolate and then the hydrolysis of 5,10-methenyltetrahydrofolate to 10-formyltetrahydrofolate. In Marinomonas sp. (strain MWYL1), this protein is Bifunctional protein FolD.